The primary structure comprises 248 residues: Probable transcriptional regulatory protein PHZ_c3068 (248 aa).

This sequence belongs to the TACO1 family.

The protein localises to the cytoplasm. The chain is Probable transcriptional regulatory protein PHZ_c3068 from Phenylobacterium zucineum (strain HLK1).